We begin with the raw amino-acid sequence, 277 residues long: Diaminopimelate epimerase (277 aa).

Residues Asn15 and Asn74 each coordinate substrate. Cys83 (proton donor) is an active-site residue. Residues 84-85 (GN), Asn159, Asn194, and 212-213 (ER) each bind substrate. Catalysis depends on Cys221, which acts as the Proton acceptor. Residue 222-223 (GT) participates in substrate binding.

It belongs to the diaminopimelate epimerase family. Homodimer.

The protein resides in the cytoplasm. The enzyme catalyses (2S,6S)-2,6-diaminopimelate = meso-2,6-diaminopimelate. It functions in the pathway amino-acid biosynthesis; L-lysine biosynthesis via DAP pathway; DL-2,6-diaminopimelate from LL-2,6-diaminopimelate: step 1/1. Functionally, catalyzes the stereoinversion of LL-2,6-diaminopimelate (L,L-DAP) to meso-diaminopimelate (meso-DAP), a precursor of L-lysine and an essential component of the bacterial peptidoglycan. The chain is Diaminopimelate epimerase from Corynebacterium glutamicum (strain R).